We begin with the raw amino-acid sequence, 294 residues long: Casein kinase II subunit beta (294 aa).

Disordered stretches follow at residues 66-90 (DHNT…SKRN) and 269-294 (KRME…MASE). The span at 70-87 (DNTTTNTSNNNDSRNGTS) shows a compositional bias: low complexity. Acidic residues predominate over residues 273 to 288 (EDDEEEEDEVEEEDDD).

This sequence belongs to the casein kinase 2 subunit beta family. As to quaternary structure, tetramer composed of two alpha chains, one beta chain and one beta' chain. Post-translationally, phosphorylated by alpha subunit.

Its function is as follows. Regulatory subunit of casein kinase II/CK2. As part of the kinase complex regulates the basal catalytic activity of the alpha subunit a constitutively active serine/threonine-protein kinase that phosphorylates a large number of substrates containing acidic residues C-terminal to the phosphorylated serine or threonine. In Candida albicans (Yeast), this protein is Casein kinase II subunit beta (CKB1).